A 140-amino-acid polypeptide reads, in one-letter code: Alpha-lactalbumin (140 aa).

The signal sequence occupies residues 1-19 (MMSLLPLLLIGIVLPATQA). In terms of domain architecture, C-type lysozyme spans 20–140 (KDYGKCELNQ…CRENLDQWNC (121 aa)). Disulfide bonds link Cys-25-Cys-140, Cys-47-Cys-131, Cys-80-Cys-96, and Cys-92-Cys-110. Residues Lys-98, Asp-101, Asp-103, Asp-106, and Asp-107 each contribute to the Ca(2+) site.

In terms of assembly, lactose synthase (LS) is a heterodimer of a catalytic component, beta1,4-galactosyltransferase (beta4Gal-T1) and a regulatory component, alpha-lactalbumin (LA). In terms of tissue distribution, mammary gland specific. Secreted in milk.

The protein localises to the secreted. Its function is as follows. Regulatory subunit of lactose synthase, changes the substrate specificity of galactosyltransferase in the mammary gland making glucose a good acceptor substrate for this enzyme. This enables LS to synthesize lactose, the major carbohydrate component of milk. In other tissues, galactosyltransferase transfers galactose onto the N-acetylglucosamine of the oligosaccharide chains in glycoproteins. The chain is Alpha-lactalbumin (LALBA) from Trichosurus vulpecula (Brush-tailed possum).